Here is a 306-residue protein sequence, read N- to C-terminus: Ornithine carbamoyltransferase (306 aa).

Carbamoyl phosphate is bound by residues 50–53 (STRT), Q77, R101, and 128–131 (HPCQ). Residues N160, D224, and 228–229 (SM) each bind L-ornithine. Carbamoyl phosphate contacts are provided by residues 264–265 (CL) and R292.

This sequence belongs to the aspartate/ornithine carbamoyltransferase superfamily. OTCase family.

It is found in the cytoplasm. It catalyses the reaction carbamoyl phosphate + L-ornithine = L-citrulline + phosphate + H(+). The protein operates within amino-acid biosynthesis; L-arginine biosynthesis; L-arginine from L-ornithine and carbamoyl phosphate: step 1/3. Functionally, reversibly catalyzes the transfer of the carbamoyl group from carbamoyl phosphate (CP) to the N(epsilon) atom of ornithine (ORN) to produce L-citrulline. In Mycobacterium leprae (strain TN), this protein is Ornithine carbamoyltransferase.